Reading from the N-terminus, the 141-residue chain is Mitochondrial import inner membrane translocase subunit Tim16 (141 aa).

Disordered stretches follow at residues 34 to 53 (AARR…SNLR) and 108 to 141 (LDHE…RQRR). Residues 60–113 (EAKQILNIDDPKNVDAITKNYEHLFQVNERSKGGSFYIQSKVFRAKERLDHEIK) are J-like. The span at 108–118 (LDHEIKAHEQP) shows a compositional bias: basic and acidic residues.

The protein belongs to the TIM16/PAM16 family. Probable component of the PAM complex at least composed of a mitochondrial HSP70 protein, Roe1, TIM44, blp/TIM16 and TIM14. Associates with the TIM23 complex. In terms of tissue distribution, expressed in distinct cells in the embryonic and larval nervous system.

The protein resides in the mitochondrion inner membrane. Its function is as follows. Regulates ATP-dependent protein translocation into the mitochondrial matrix. Essential for larval development. The chain is Mitochondrial import inner membrane translocase subunit Tim16 (blp) from Drosophila melanogaster (Fruit fly).